Here is a 426-residue protein sequence, read N- to C-terminus: Glutamate/glutamine/aspartate/asparagine transport system permease protein BztB (426 aa).

8 helical membrane passes run 25–45 (SITI…WLLN), 96–116 (LLVS…IGVL), 132–152 (VETF…TILA), 211–231 (LPVS…FWGW), 252–272 (WWPS…GLGF), 293–313 (SFTA…AEIV), 340–360 (SLVI…SQFL), and 396–416 (MLLM…LMNL). Positions 92 to 414 (LLNTLLVSVL…TISLTISSLM (323 aa)) constitute an ABC transmembrane type-1 domain.

The protein belongs to the binding-protein-dependent transport system permease family. HisMQ subfamily. As to quaternary structure, bztB and BztC form a heterodimer which can form a membrane complex with a homodimer of BztD.

It is found in the cell inner membrane. In terms of biological role, part of a binding-protein-dependent transport system for glutamate, glutamine, aspartate and asparagine. Probably responsible for the translocation of the substrate across the membrane. This chain is Glutamate/glutamine/aspartate/asparagine transport system permease protein BztB (bztB), found in Rhodobacter capsulatus (strain ATCC BAA-309 / NBRC 16581 / SB1003).